The primary structure comprises 179 residues: Large ribosomal subunit protein uL5 (179 aa).

This sequence belongs to the universal ribosomal protein uL5 family. As to quaternary structure, part of the 50S ribosomal subunit; part of the 5S rRNA/L5/L18/L25 subcomplex. Contacts the 5S rRNA and the P site tRNA. Forms a bridge to the 30S subunit in the 70S ribosome.

Functionally, this is one of the proteins that bind and probably mediate the attachment of the 5S RNA into the large ribosomal subunit, where it forms part of the central protuberance. In the 70S ribosome it contacts protein S13 of the 30S subunit (bridge B1b), connecting the 2 subunits; this bridge is implicated in subunit movement. Contacts the P site tRNA; the 5S rRNA and some of its associated proteins might help stabilize positioning of ribosome-bound tRNAs. This Shewanella denitrificans (strain OS217 / ATCC BAA-1090 / DSM 15013) protein is Large ribosomal subunit protein uL5.